Reading from the N-terminus, the 415-residue chain is UDP-N-acetylglucosamine 1-carboxyvinyltransferase 1 (415 aa).

23-24 (KN) is a phosphoenolpyruvate binding site. R92 contributes to the UDP-N-acetyl-alpha-D-glucosamine binding site. C116 acts as the Proton donor in catalysis. At C116 the chain carries 2-(S-cysteinyl)pyruvic acid O-phosphothioketal. UDP-N-acetyl-alpha-D-glucosamine is bound by residues 121 to 125 (RPIDL), D304, and V326.

This sequence belongs to the EPSP synthase family. MurA subfamily.

It localises to the cytoplasm. It catalyses the reaction phosphoenolpyruvate + UDP-N-acetyl-alpha-D-glucosamine = UDP-N-acetyl-3-O-(1-carboxyvinyl)-alpha-D-glucosamine + phosphate. It participates in cell wall biogenesis; peptidoglycan biosynthesis. Its function is as follows. Cell wall formation. Adds enolpyruvyl to UDP-N-acetylglucosamine. In Caldanaerobacter subterraneus subsp. tengcongensis (strain DSM 15242 / JCM 11007 / NBRC 100824 / MB4) (Thermoanaerobacter tengcongensis), this protein is UDP-N-acetylglucosamine 1-carboxyvinyltransferase 1.